Consider the following 829-residue polypeptide: 1,4-alpha-glucan branching enzyme GlgB (829 aa).

Catalysis depends on aspartate 405, which acts as the Nucleophile. Glutamate 458 functions as the Proton donor in the catalytic mechanism. The disordered stretch occupies residues 758 to 829; that stretch reads ASKATKVSTK…TTAKKTKDNA (72 aa). 2 stretches are compositionally biased toward low complexity: residues 778-789 and 810-820; these read VKAATKSSVTKV and VTKTAKASAKT.

The protein belongs to the glycosyl hydrolase 13 family. GlgB subfamily. In terms of assembly, monomer.

It carries out the reaction Transfers a segment of a (1-&gt;4)-alpha-D-glucan chain to a primary hydroxy group in a similar glucan chain.. The protein operates within glycan biosynthesis; glycogen biosynthesis. Functionally, catalyzes the formation of the alpha-1,6-glucosidic linkages in glycogen by scission of a 1,4-alpha-linked oligosaccharide from growing alpha-1,4-glucan chains and the subsequent attachment of the oligosaccharide to the alpha-1,6 position. The protein is 1,4-alpha-glucan branching enzyme GlgB of Actinobacillus succinogenes (strain ATCC 55618 / DSM 22257 / CCUG 43843 / 130Z).